Consider the following 397-residue polypeptide: DNA-directed RNA polymerase subunit Rpo1C (397 aa).

This sequence belongs to the RNA polymerase beta' chain family. As to quaternary structure, part of the RNA polymerase complex.

The protein resides in the cytoplasm. The catalysed reaction is RNA(n) + a ribonucleoside 5'-triphosphate = RNA(n+1) + diphosphate. In terms of biological role, DNA-dependent RNA polymerase (RNAP) catalyzes the transcription of DNA into RNA using the four ribonucleoside triphosphates as substrates. Forms part of the jaw domain. The sequence is that of DNA-directed RNA polymerase subunit Rpo1C from Methanosarcina acetivorans (strain ATCC 35395 / DSM 2834 / JCM 12185 / C2A).